The chain runs to 154 residues: Transcription antitermination protein NusB (154 aa).

The protein belongs to the NusB family.

Its function is as follows. Involved in transcription antitermination. Required for transcription of ribosomal RNA (rRNA) genes. Binds specifically to the boxA antiterminator sequence of the ribosomal RNA (rrn) operons. The polypeptide is Transcription antitermination protein NusB (Oleidesulfovibrio alaskensis (strain ATCC BAA-1058 / DSM 17464 / G20) (Desulfovibrio alaskensis)).